A 383-amino-acid chain; its full sequence is Queuine tRNA-ribosyltransferase (383 aa).

The active-site Proton acceptor is Asp90. Residues Asp90–Phe94, Asp144, Gln193, and Gly227 each bind substrate. The segment at Gly258–Asp264 is RNA binding. Catalysis depends on Asp277, which acts as the Nucleophile. The segment at Thr282–Arg286 is RNA binding; important for wobble base 34 recognition. Positions 315, 317, 320, and 346 each coordinate Zn(2+).

The protein belongs to the queuine tRNA-ribosyltransferase family. As to quaternary structure, homodimer. Within each dimer, one monomer is responsible for RNA recognition and catalysis, while the other monomer binds to the replacement base PreQ1. The cofactor is Zn(2+).

The enzyme catalyses 7-aminomethyl-7-carbaguanine + guanosine(34) in tRNA = 7-aminomethyl-7-carbaguanosine(34) in tRNA + guanine. It functions in the pathway tRNA modification; tRNA-queuosine biosynthesis. Functionally, catalyzes the base-exchange of a guanine (G) residue with the queuine precursor 7-aminomethyl-7-deazaguanine (PreQ1) at position 34 (anticodon wobble position) in tRNAs with GU(N) anticodons (tRNA-Asp, -Asn, -His and -Tyr). Catalysis occurs through a double-displacement mechanism. The nucleophile active site attacks the C1' of nucleotide 34 to detach the guanine base from the RNA, forming a covalent enzyme-RNA intermediate. The proton acceptor active site deprotonates the incoming PreQ1, allowing a nucleophilic attack on the C1' of the ribose to form the product. After dissociation, two additional enzymatic reactions on the tRNA convert PreQ1 to queuine (Q), resulting in the hypermodified nucleoside queuosine (7-(((4,5-cis-dihydroxy-2-cyclopenten-1-yl)amino)methyl)-7-deazaguanosine). The polypeptide is Queuine tRNA-ribosyltransferase (Ralstonia nicotianae (strain ATCC BAA-1114 / GMI1000) (Ralstonia solanacearum)).